The primary structure comprises 459 residues: Cysteine--tRNA ligase (459 aa).

Residue Cys-31 participates in Zn(2+) binding. The short motif at 33–43 (PTVYYNPHIGN) is the 'HIGH' region element. Zn(2+) is bound by residues Cys-216, His-241, and Glu-245. The 'KMSKS' region motif lies at 274–278 (KMSKS). Lys-277 contributes to the ATP binding site.

The protein belongs to the class-I aminoacyl-tRNA synthetase family. Monomer. Zn(2+) is required as a cofactor.

Its subcellular location is the cytoplasm. It carries out the reaction tRNA(Cys) + L-cysteine + ATP = L-cysteinyl-tRNA(Cys) + AMP + diphosphate. This chain is Cysteine--tRNA ligase, found in Rickettsia peacockii (strain Rustic).